Consider the following 92-residue polypeptide: Putative phosphotransferase enzyme IIB component BB_0367 (92 aa).

In terms of domain architecture, PTS EIIB type-1 spans 10–92 (IKVAEHIVEC…ILYMMNEQKQ (83 aa)).

It is found in the cytoplasm. Its function is as follows. The phosphoenolpyruvate-dependent sugar phosphotransferase system (PTS), a major carbohydrate active -transport system, catalyzes the phosphorylation of incoming sugar substrates concomitant with their translocation across the cell membrane. This is Putative phosphotransferase enzyme IIB component BB_0367 from Borreliella burgdorferi (strain ATCC 35210 / DSM 4680 / CIP 102532 / B31) (Borrelia burgdorferi).